The sequence spans 1053 residues: Ubiquitin-like modifier-activating enzyme 6 (1053 aa).

The residue at position 1 (M1) is an N-acetylmethionine. Residue R46 coordinates ATP. T54 is subject to Phosphothreonine. 2 residues coordinate ATP: A470 and D497. Mg(2+) contacts are provided by D499 and E502. Residues N505, R508, Q509, and K521 each contribute to the ATP site. K544 is subject to N6-acetyllysine. V545 lines the ATP pocket. D569 serves as a coordination point for Mg(2+). Position 570 (N570) interacts with ATP. Catalysis depends on C625, which acts as the Glycyl thioester intermediate. K729 carries the N6-acetyllysine modification. A Phosphoserine modification is found at S737.

Belongs to the ubiquitin-activating E1 family. In terms of assembly, forms a thioester with UBD in cells stimulated with tumor necrosis factor-alpha (TNFa) and interferon-gamma (IFNg).

The catalysed reaction is ATP + ubiquitin + [E1 ubiquitin-activating enzyme]-L-cysteine = AMP + diphosphate + S-ubiquitinyl-[E1 ubiquitin-activating enzyme]-L-cysteine.. It functions in the pathway protein modification; protein ubiquitination. Functionally, activates ubiquitin by first adenylating its C-terminal glycine residue with ATP, and thereafter linking this residue to the side chain of a cysteine residue in E1, yielding a ubiquitin-E1 thioester and free AMP. Specific for ubiquitin, does not activate ubiquitin-like peptides. Also activates UBD/FAT10 conjugation via adenylation of its C-terminal glycine. Differs from UBE1 in its specificity for substrate E2 charging. Does not charge cell cycle E2s, such as CDC34. Essential for embryonic development. The chain is Ubiquitin-like modifier-activating enzyme 6 (Uba6) from Mus musculus (Mouse).